Consider the following 274-residue polypeptide: Nickel/cobalt efflux system RcnA (274 aa).

Residues 1–12 (MTEFTTLLQQGN) are Periplasmic-facing. The chain crosses the membrane as a helical span at residues 13–33 (AWFFIPSAILLGALHGLEPGH). The Cytoplasmic portion of the chain corresponds to 34–56 (SKTMMAAFIIAIKGTIKQAVMLG). A helical transmembrane segment spans residues 57–77 (LAATISHTAVVWLIAFGGMVI). At 78-86 (SKRFTAQSA) the chain is on the periplasmic side. Residues 87-107 (EPWLQLISAVIIISTAFWMFW) form a helical membrane-spanning segment. Residues 108–175 (RTWRGERNWL…DGREVTNWQI (68 aa)) lie on the Cytoplasmic side of the membrane. The segment at 127–153 (HHHHDHEHHHDHGHHHHHEHGEYQDAH) is disordered. Residues 129–144 (HHDHEHHHDHGHHHHH) are compositionally biased toward basic residues. The chain crosses the membrane as a helical span at residues 176-196 (LLFGLTGGLIPCPAAITVLLI). The Periplasmic segment spans residues 197–209 (CIQLKALTLGATL). The helical transmembrane segment at 210-230 (VVSFSIGLALTLVTVGVGAAI) threads the bilayer. Residues 231–251 (SVQQVAKRWSGFNTLAKRAPY) lie on the Cytoplasmic side of the membrane. Residues 252-272 (FSSLLIGLVGVYMGVHGFMGI) traverse the membrane as a helical segment. At 273–274 (MR) the chain is on the periplasmic side.

It belongs to the NiCoT transporter (TC 2.A.52) family. RcnA subfamily.

Its subcellular location is the cell inner membrane. Efflux system for nickel and cobalt. The protein is Nickel/cobalt efflux system RcnA (rcnA) of Escherichia coli (strain K12).